An 825-amino-acid polypeptide reads, in one-letter code: Probable inorganic carbon transporter subunit DabA (825 aa).

The Zn(2+) site is built by cysteine 334, aspartate 336, histidine 521, and cysteine 536.

It belongs to the inorganic carbon transporter (TC 9.A.2) DabA family. In terms of assembly, forms a complex with DabB. It depends on Zn(2+) as a cofactor.

Its subcellular location is the cell inner membrane. In terms of biological role, part of an energy-coupled inorganic carbon pump. In Acidithiobacillus ferrooxidans (strain ATCC 23270 / DSM 14882 / CIP 104768 / NCIMB 8455) (Ferrobacillus ferrooxidans (strain ATCC 23270)), this protein is Probable inorganic carbon transporter subunit DabA.